A 199-amino-acid polypeptide reads, in one-letter code: Peptidyl-tRNA hydrolase (199 aa).

Residue Tyr-15 coordinates tRNA. His-20 (proton acceptor) is an active-site residue. Positions 66, 68, and 114 each coordinate tRNA.

Belongs to the PTH family. Monomer.

The protein resides in the cytoplasm. It catalyses the reaction an N-acyl-L-alpha-aminoacyl-tRNA + H2O = an N-acyl-L-amino acid + a tRNA + H(+). Hydrolyzes ribosome-free peptidyl-tRNAs (with 1 or more amino acids incorporated), which drop off the ribosome during protein synthesis, or as a result of ribosome stalling. Its function is as follows. Catalyzes the release of premature peptidyl moieties from peptidyl-tRNA molecules trapped in stalled 50S ribosomal subunits, and thus maintains levels of free tRNAs and 50S ribosomes. In Cupriavidus pinatubonensis (strain JMP 134 / LMG 1197) (Cupriavidus necator (strain JMP 134)), this protein is Peptidyl-tRNA hydrolase.